A 1309-amino-acid polypeptide reads, in one-letter code: Target of rapamycin complex 2 subunit ste20 (1309 aa).

The 87-residue stretch at 24–110 (DFIKKMNTTD…IESFQGENGE (87 aa)) folds into the REM-1 domain. The segment at 105–128 (QGENGEAKTGSTSLTRSASATVSR) is disordered. Residues 113–128 (TGSTSLTRSASATVSR) are compositionally biased toward polar residues. Residue Ser-151 is modified to Phosphoserine. Residues 183-205 (NVNEKNNSSSEDTQPNGKRPSSL) are disordered. Residues 194 to 205 (DTQPNGKRPSSL) show a composition bias toward polar residues. 6 consecutive transmembrane segments (helical) span residues 285–305 (LFLDATAFSCCQMLNLPWILS), 392–412 (LIDGSISENLAASAALALVYL), 504–524 (VIDLFFLIFQVEYSSWSESFL), 564–584 (TAVLLFIFLELGLVESIVCMI), 926–946 (LNHWAISLLIFQLYDPCLEVC), and 984–1004 (LLLRFLATTVGFHYLSEINFI). Thr-1203 is modified (phosphothreonine).

Belongs to the RICTOR family. The target of rapamycin complex 2 (TORC2) is composed of at least bit61, pop3/wat1, sin1, ste20 and tor1. Post-translationally, either Ser-203 or Ser-204 are phosphorylated as well.

Its subcellular location is the membrane. In terms of biological role, component of TORC2, which regulates multiple cellular processes to control cell growth in response to environmental signals. TORC2 is required for cell survival under various stress conditions. TORC2 positively controls G1 cell-cycle arrest, sexual development and amino acid uptake. Positively regulates amino acid uptake through the control of expression of amino acid permeases. The polypeptide is Target of rapamycin complex 2 subunit ste20 (Schizosaccharomyces pombe (strain 972 / ATCC 24843) (Fission yeast)).